The sequence spans 65 residues: Small ribosomal subunit protein bS21 (65 aa).

The protein belongs to the bacterial ribosomal protein bS21 family.

This Thermodesulfovibrio yellowstonii (strain ATCC 51303 / DSM 11347 / YP87) protein is Small ribosomal subunit protein bS21.